The primary structure comprises 356 residues: Peptide chain release factor 1 (356 aa).

N5-methylglutamine is present on Gln234.

This sequence belongs to the prokaryotic/mitochondrial release factor family. Methylated by PrmC. Methylation increases the termination efficiency of RF1.

The protein resides in the cytoplasm. In terms of biological role, peptide chain release factor 1 directs the termination of translation in response to the peptide chain termination codons UAG and UAA. The chain is Peptide chain release factor 1 from Parafrankia sp. (strain EAN1pec).